A 94-amino-acid chain; its full sequence is Co-chaperonin GroES (94 aa).

It belongs to the GroES chaperonin family. In terms of assembly, heptamer of 7 subunits arranged in a ring. Interacts with the chaperonin GroEL.

It is found in the cytoplasm. Its function is as follows. Together with the chaperonin GroEL, plays an essential role in assisting protein folding. The GroEL-GroES system forms a nano-cage that allows encapsulation of the non-native substrate proteins and provides a physical environment optimized to promote and accelerate protein folding. GroES binds to the apical surface of the GroEL ring, thereby capping the opening of the GroEL channel. The protein is Co-chaperonin GroES of Limosilactobacillus reuteri (strain DSM 20016) (Lactobacillus reuteri).